Reading from the N-terminus, the 278-residue chain is MSDIDEKNDTKESSFSSDVVLLSLLISGSTLGAIAGYNRYLKQVTKATDIPNYMFRKRWMYGKVTAVGDGDNFHLFHTPGGIFGGWGWLRKVPKLPKSDSNGLIVSRKKTSNFYSGLKNSYHKFTGSYRYSSEYFLDLKVPYKNLRNLPTVPIRLCAIDAPERAHFGNTSQPYGDEALIWLRNRLLGKYVWVKPLSVDQYNRCVSKVVCWNWLGWQNISLQMVRQGLAVVYEGKTSAEFDREEFLYRFYERRSKAKKRGLWRQRVIETPGEYKKKIKK.

The chain crosses the membrane as a helical span at residues 15–37 (FSSDVVLLSLLISGSTLGAIAGY). The TNase-like domain occupies 58-263 (RWMYGKVTAV…KAKKRGLWRQ (206 aa)). The active site involves R154. D159 is a Ca(2+) binding site. Catalysis depends on residues E162 and R202.

Belongs to the LCL3 family.

It localises to the mitochondrion. The protein localises to the membrane. This Vanderwaltozyma polyspora (strain ATCC 22028 / DSM 70294 / BCRC 21397 / CBS 2163 / NBRC 10782 / NRRL Y-8283 / UCD 57-17) (Kluyveromyces polysporus) protein is Probable endonuclease LCL3 (LCL3).